Reading from the N-terminus, the 105-residue chain is Heat shock protein HspQ (105 aa).

The interval 74–105 is disordered; that stretch reads SSELQDERPEQPSMDELAQTIRKQRQAPRLRN. Residues 95 to 105 are compositionally biased toward basic residues; sequence RKQRQAPRLRN.

This sequence belongs to the HspQ family.

Its subcellular location is the cytoplasm. In terms of biological role, involved in the degradation of certain denaturated proteins, including DnaA, during heat shock stress. The sequence is that of Heat shock protein HspQ from Shigella dysenteriae serotype 1 (strain Sd197).